The primary structure comprises 425 residues: Serine--tRNA ligase (425 aa).

Residue threonine 231 to glutamate 233 coordinates L-serine. Residue arginine 262–glutamate 264 participates in ATP binding. Glutamate 285 contacts L-serine. Position 349–352 (glutamate 349–serine 352) interacts with ATP. L-serine is bound at residue serine 385.

The protein belongs to the class-II aminoacyl-tRNA synthetase family. Type-1 seryl-tRNA synthetase subfamily. As to quaternary structure, homodimer. The tRNA molecule binds across the dimer.

It localises to the cytoplasm. It carries out the reaction tRNA(Ser) + L-serine + ATP = L-seryl-tRNA(Ser) + AMP + diphosphate + H(+). The catalysed reaction is tRNA(Sec) + L-serine + ATP = L-seryl-tRNA(Sec) + AMP + diphosphate + H(+). Its pathway is aminoacyl-tRNA biosynthesis; selenocysteinyl-tRNA(Sec) biosynthesis; L-seryl-tRNA(Sec) from L-serine and tRNA(Sec): step 1/1. In terms of biological role, catalyzes the attachment of serine to tRNA(Ser). Is also able to aminoacylate tRNA(Sec) with serine, to form the misacylated tRNA L-seryl-tRNA(Sec), which will be further converted into selenocysteinyl-tRNA(Sec). In Bacillus subtilis (strain 168), this protein is Serine--tRNA ligase.